The primary structure comprises 466 residues: Neuronal acetylcholine receptor subunit non-alpha-3 (466 aa).

A signal peptide spans 1-28 (MKLQISGLLLVTAVAYATIEAPEEFVSL). At 29 to 235 (AEMEDTLLRN…VTYSFILKRL (207 aa)) the chain is on the extracellular side. N-linked (GlcNAc...) asparagine glycosylation is found at N54, N141, N169, and N208. C156 and C170 form a disulfide bridge. A run of 3 helical transmembrane segments spans residues 236–260 (PLFY…VFYL), 268–285 (LLLS…LLVI), and 302–323 (YLLF…VINV). Topologically, residues 324-438 (HHRSSATYHP…WKFVAQVLDR (115 aa)) are cytoplasmic. The chain crosses the membrane as a helical span at residues 439-456 (IFLWVFLTASVLGTILIF).

It belongs to the ligand-gated ion channel (TC 1.A.9) family. Acetylcholine receptor (TC 1.A.9.1) subfamily. As to quaternary structure, neuronal AChR seems to be composed of two different type of subunits: alpha and non-alpha (beta). Retina, tectum and brain.

It is found in the postsynaptic cell membrane. The protein resides in the cell membrane. After binding acetylcholine, the AChR responds by an extensive change in conformation that affects all subunits and leads to opening of an ion-conducting channel across the plasma membrane. This Carassius auratus (Goldfish) protein is Neuronal acetylcholine receptor subunit non-alpha-3.